A 329-amino-acid polypeptide reads, in one-letter code: uncharacterized protein (329 aa).

In terms of domain architecture, Nudix hydrolase spans 27-185 (PRRASVAVII…IQIDSSRALK (159 aa)). The next 3 membrane-spanning stretches (helical) occupy residues 123–143 (VITSNWGQFPLLLLSSFVFIL), 227–247 (PFLRGITHSIFVDLFIFLSPS), and 303–323 (LTLLVGFLFRLFLVYLLFLII).

It localises to the membrane. This is an uncharacterized protein from Schizosaccharomyces pombe (strain 972 / ATCC 24843) (Fission yeast).